Here is a 31-residue protein sequence, read N- to C-terminus: Cyclotide vibi-H (31 aa).

The segment at residues Gly1 to Asn31 is a cross-link (cyclopeptide (Gly-Asn)). Intrachain disulfides connect Cys5-Cys21, Cys9-Cys23, and Cys14-Cys28.

This is a cyclic peptide.

Its function is as follows. Probably participates in a plant defense mechanism. Has cytotoxic activity, active against a human lymphoma cell line with an IC(50) of 1.6 uM. This is Cyclotide vibi-H from Viola biflora (Yellow wood violet).